Reading from the N-terminus, the 399-residue chain is Methylthioribose kinase (399 aa).

Residues asparagine 40, lysine 57, and 111-113 (EDL) each bind ATP. Aspartate 229 is a substrate binding site. ATP is bound at residue 246 to 248 (DAE). Residue arginine 344 participates in substrate binding.

Belongs to the methylthioribose kinase family. In terms of assembly, homodimer.

The enzyme catalyses 5-(methylsulfanyl)-D-ribose + ATP = 5-(methylsulfanyl)-alpha-D-ribose 1-phosphate + ADP + H(+). Its pathway is amino-acid biosynthesis; L-methionine biosynthesis via salvage pathway; S-methyl-5-thio-alpha-D-ribose 1-phosphate from S-methyl-5'-thioadenosine (hydrolase route): step 2/2. Its function is as follows. Catalyzes the phosphorylation of methylthioribose into methylthioribose-1-phosphate. The chain is Methylthioribose kinase from Enterobacter sp. (strain 638).